The sequence spans 783 residues: Isoamylase 1, chloroplastic (783 aa).

Residues Met1 to Ser43 constitute a chloroplast transit peptide. Asp410 serves as the catalytic Nucleophile. Catalysis depends on Glu466, which acts as the Proton donor.

This sequence belongs to the glycosyl hydrolase 13 family. As to quaternary structure, associates with ISA2 to form the heteromultimeric complex Iso1 required for amylopectin synthesis.

The protein localises to the plastid. It is found in the chloroplast. The catalysed reaction is Hydrolysis of (1-&gt;6)-alpha-D-glucosidic branch linkages in glycogen, amylopectin and their beta-limit dextrins.. The protein operates within glycan biosynthesis; starch biosynthesis. Its function is as follows. Involved in the trimming of pre-amylopectin chains. Accelerates the crystallization of nascent amylopectin molecules during starch synthesis. ISA1 and ISA2 work exclusively together as a multimeric holoenzyme. ISA1-ISA2 removes preferentially branches that are very close to other branches. Promotes negative gravitropic responses in shoots by facilitating starch granules (statoliths) formation in hypocotyls. In Arabidopsis thaliana (Mouse-ear cress), this protein is Isoamylase 1, chloroplastic.